The primary structure comprises 423 residues: Galactosylceramide sulfotransferase (423 aa).

The Cytoplasmic portion of the chain corresponds to 1–14; sequence MLPPQKKPWESMAK. Residues 15–35 form a helical; Signal-anchor for type II membrane protein membrane-spanning segment; the sequence is GLVLGALFTSFLLLVYSYAVP. The Lumenal segment spans residues 36 to 423; sequence PLHAGLASTT…WKFIRDFLRW (388 aa). N66 and N312 each carry an N-linked (GlcNAc...) asparagine glycan.

It belongs to the galactose-3-O-sulfotransferase family. As to expression, expressed in kidney proximal tubule, gastric mucosa and adenocarcinoma. Highly expressed in renal cell carcinoma cell lines.

The protein localises to the golgi apparatus membrane. It catalyses the reaction a beta-D-galactosyl-(1&lt;-&gt;1')-N-acylsphing-4-enine + 3'-phosphoadenylyl sulfate = an N-acyl-1-beta-D-(3-O-sulfo)-galactosyl-sphing-4-enine + adenosine 3',5'-bisphosphate + H(+). The enzyme catalyses a 1-O-alkyl-2-acyl-3-O-(beta-D-galactosyl)-sn-glycerol + 3'-phosphoadenylyl sulfate = a 1-O-alkyl-2-acyl-3-(beta-D-3-sulfogalactosyl)-sn-glycerol + adenosine 3',5'-bisphosphate + H(+). It carries out the reaction a beta-D-Gal-(1&lt;-&gt;1')-ceramide + 3'-phosphoadenylyl sulfate = 1-(3-O-sulfo-beta-D-galactosyl)-ceramide + adenosine 3',5'-bisphosphate + H(+). The catalysed reaction is a 1,2-diacyl-3-O-(beta-D-galactosyl)-sn-glycerol + 3'-phosphoadenylyl sulfate = 1,2-diacyl-3-(3-O-sulfo-beta-D-galactosyl)-sn-glycerol + adenosine 3',5'-bisphosphate + H(+). It catalyses the reaction a beta-D-Gal-(1-&gt;4)-beta-D-Glc-(1&lt;-&gt;1)-Cer(d18:1(4E)) + 3'-phosphoadenylyl sulfate = beta-D-3-sulfogalactosyl-(1-&gt;4)-beta-D-glucosyl-(1&lt;-&gt;1')-N-acylsphing-4-enine + adenosine 3',5'-bisphosphate + H(+). Its pathway is lipid metabolism; sphingolipid metabolism. In terms of biological role, catalyzes the transfer of a sulfate group to position 3 of non-reducing beta-galactosyl residues in glycerolipids and sphingolipids, therefore participates in the biosynthesis of sulfoglycolipids. Catalyzes the synthesis of galactosylceramide sulfate (sulfatide), a major lipid component of the myelin sheath and of monogalactosylalkylacylglycerol sulfate (seminolipid), present in spermatocytes. Seems to prefer beta-glycosides at the non-reducing termini of sugar chains attached to a lipid moiety. Also acts on lactosylceramide, galactosyl 1-alkyl-2-sn-glycerol and galactosyl diacylglycerol (in vitro). This is Galactosylceramide sulfotransferase from Homo sapiens (Human).